The primary structure comprises 1354 residues: Rho-associated protein kinase 1 (1354 aa).

S2 is subject to N-acetylserine. In terms of domain architecture, Protein kinase spans 76-338; the sequence is YEVVKVIGRG…VEEIKRHLFF (263 aa). ATP is bound by residues 82–90 and K105; that span reads IGRGAFGEV. D198 (proton acceptor) is an active-site residue. The AGC-kinase C-terminal domain occupies 341–409; the sequence is DQWAWETLRD…YSNRRYLSPA (69 aa). The interval 368-727 is interaction with FHOD1; it reads FDDLEEDKGD…KKLKEEREAR (360 aa). A coiled-coil region spans residues 422–692; the sequence is KSLQENLQKT…RLEQEVNEHK (271 aa). The region spanning 479-556 is the REM-1 domain; sequence STVSQIEKEK…LEEANDLLRT (78 aa). An SHROOM3 binding region spans residues 707–946; sequence EAKSVAMCEM…AVSRLEETNS (240 aa). Residues 949–1015 form the RhoBD domain; that stretch reads TKDIELLRKE…LAEIMNRKDF (67 aa). The segment at 998 to 1010 is RHOA binding; sequence LKTQAVNKLAEIM. Positions 1011–1102 form a coiled coil; that stretch reads NRKDFKIDKK…KLSDLSDSTS (92 aa). Positions 1101 to 1120 are disordered; it reads TSVASFPSADETDPNLPESR. Residues S1105 and S1108 each carry the phosphoserine modification. The interval 1115–1354 is auto-inhibitory; that stretch reads NLPESRIEGW…VVKNTSGKTS (240 aa). The 200-residue stretch at 1118-1317 folds into the PH domain; sequence ESRIEGWLSV…WVTHLVKKIP (200 aa). A Phorbol-ester/DAG-type zinc finger spans residues 1228–1283; that stretch reads GHEFIPTLYHFPANCEACAKPLWHVFKPPPALECRRCHVKCHRDHLDKKEDLISPC. S1328 carries the phosphoserine modification. A disordered region spans residues 1333–1354; the sequence is STRSTANQSFRKVVKNTSGKTS.

Belongs to the protein kinase superfamily. AGC Ser/Thr protein kinase family. As to quaternary structure, homodimer. Interacts with RHOA (activated by GTP), RHOB, RHOC, GEM, MYLC2B, RHOE, PPP1R12A, LIMK1, LIMK2, TSG101, CHORDC1, DAPK3, PFN1, PTEN and JIP3. Interacts with FHOD1 in a Src-dependent manner. Interacts with ITGB1BP1 (via N-terminus and PTB domain). Interacts with SHROOM3. Mg(2+) serves as cofactor. In terms of processing, autophosphorylated on serine and threonine residues. Cleaved by caspase-3 during apoptosis. This leads to constitutive activation of the kinase and membrane blebbing. Detected in corneal epithelium.

It localises to the cytoplasm. The protein resides in the cytoskeleton. It is found in the microtubule organizing center. The protein localises to the centrosome. Its subcellular location is the centriole. It localises to the golgi apparatus membrane. The protein resides in the cell projection. It is found in the bleb. The protein localises to the cell membrane. Its subcellular location is the lamellipodium. It localises to the ruffle. It carries out the reaction L-seryl-[protein] + ATP = O-phospho-L-seryl-[protein] + ADP + H(+). The enzyme catalyses L-threonyl-[protein] + ATP = O-phospho-L-threonyl-[protein] + ADP + H(+). Its activity is regulated as follows. Activated by RHOA binding. Inhibited by Y-27632. Protein kinase which is a key regulator of the actin cytoskeleton and cell polarity. Involved in regulation of smooth muscle contraction, actin cytoskeleton organization, stress fiber and focal adhesion formation, neurite retraction, cell adhesion and motility via phosphorylation of DAPK3, GFAP, LIMK1, LIMK2, MYL9/MLC2, TPPP, PFN1 and PPP1R12A. Phosphorylates FHOD1 and acts synergistically with it to promote SRC-dependent non-apoptotic plasma membrane blebbing. Phosphorylates JIP3 and regulates the recruitment of JNK to JIP3 upon UVB-induced stress. Acts as a suppressor of inflammatory cell migration by regulating PTEN phosphorylation and stability. Acts as a negative regulator of VEGF-induced angiogenic endothelial cell activation. Required for centrosome positioning and centrosome-dependent exit from mitosis. Plays a role in terminal erythroid differentiation. Inhibits podocyte motility via regulation of actin cytoskeletal dynamics and phosphorylation of CFL1. Promotes keratinocyte terminal differentiation. Involved in osteoblast compaction through the fibronectin fibrillogenesis cell-mediated matrix assembly process, essential for osteoblast mineralization. May regulate closure of the eyelids and ventral body wall by inducing the assembly of actomyosin bundles. The chain is Rho-associated protein kinase 1 (ROCK1) from Oryctolagus cuniculus (Rabbit).